A 134-amino-acid chain; its full sequence is Arsenate reductase (134 aa).

Residues Cys11, Cys83, and Cys90 each act as nucleophile in the active site. Intrachain disulfides connect Cys11-Cys83 and Cys83-Cys90.

The protein belongs to the low molecular weight phosphotyrosine protein phosphatase family. Thioredoxin-coupled ArsC subfamily.

The protein localises to the cytoplasm. The enzyme catalyses arsenate + [thioredoxin]-dithiol + H(+) = arsenite + [thioredoxin]-disulfide + H2O. In terms of biological role, catalyzes the reduction of arsenate [As(V)] to arsenite [As(III)]. In Bacillus cereus (strain ATCC 14579 / DSM 31 / CCUG 7414 / JCM 2152 / NBRC 15305 / NCIMB 9373 / NCTC 2599 / NRRL B-3711), this protein is Arsenate reductase.